Consider the following 376-residue polypeptide: MGSISQSHKRQPLELQGHLASFKAFDCTPVLGTEFPDAKLAEWLQAPNADDLIRDLAITISQRGVVIFRSQVDLTDELQKTLVQKLGELTGKPSDSTWHIHPLAKYNPTGDSTRHLITTDPKNKPAEDRFRNQAEQPMGVRAAWHTDISYEPNPADYSCLKMVQLPTNGGGKWPQLPILTPVERHGTMANAKCANSIEQSDTLYASSYEVLDKISPAYRKFLETLTATFAQPRYNQSSQEKKSEIHVEPRGSPNNVGSDLSAIHPVVRTNPVTGWKGLYGAGMHTRRFNEVTADESRRLADWLLQMIVENHDLQFRHSWKNPYDVAIWDNRAVFHAGIMDYKGQGHRTGHRYVGVGEQPYLDPESKTRREALGEFN.

His145 and Asp147 together coordinate Fe cation. Thr202 is a binding site for 2-oxoglutarate. The segment at 234-260 (YNQSSQEKKSEIHVEPRGSPNNVGSDL) is disordered. A compositionally biased stretch (basic and acidic residues) spans 239–249 (QEKKSEIHVEP). His335 provides a ligand contact to Fe cation. 2 residues coordinate 2-oxoglutarate: Arg347 and Arg351. A disordered region spans residues 354–376 (GVGEQPYLDPESKTRREALGEFN). The segment covering 363–376 (PESKTRREALGEFN) has biased composition (basic and acidic residues).

This sequence belongs to the TfdA dioxygenase family. Fe(2+) is required as a cofactor.

Alpha-ketoglutarate-dependent dioxygenas; part of the cluster that mediates the biosynthesis of shearones, diterpenoid pyrones (DPs) which are structurally diverse meroterpenoids consisting of a diterpene linked by a pyrone, and which may exhibit a range of bioactivities. The alpha-ketoglutarate-dependent dioxygenase esdpJ seems not to be involved in this pathway. The molecular scaffold is commonly biosynthesized by a series of enzymes including the non-reducing polyketide synthase (NR-PKS) esdpA that generates an alpha-pyrone; the prenyltransferase esdpC that attaches a geranylgeranyl pyrophosphate (GGPP) produced by the GGPP synthase (GGPPS) esdpD onto the pyrone unit; the FAD-dependent monooxygenase esdpE that converts an olefin on the diterpene unit into an epoxide; and the terpene cyclase esdpB that catalyzes the cyclization reactions to give the molecular backbone shearone A. In the modification steps, esdpF oxidizes the hydroxy group to a ketone at C-3 and esdpG then attaches hydroxy groups at both C-11 and C-12. After that, esdpI hydroxylates at C-20 and esdpH hydroxylates at C-6'. The ether bridge is generated by nucleophilic attack of the hydroxy group at C-20 to the carbonyl carbon at C-3. EsdpH can also functions prior to esdpI. The different combinations of these modification enzymes lead to the production of diverse shearone derivatives, shearone I being the end product of the pathway. The chain is Alpha-ketoglutarate-dependent dioxygenase esdpJ from Penicillium shearii (Eupenicillium shearii).